The following is a 237-amino-acid chain: Concanavalin-Br (237 aa).

Mn(2+) contacts are provided by Glu8 and Asp10. Ca(2+)-binding residues include Asp10, Tyr12, Asn14, and Asp19. Tyr12 lines the a carbohydrate pocket. Mn(2+) contacts are provided by Asp19, His24, and Ser34. 99–100 (LY) provides a ligand contact to a carbohydrate. Residue Asp208 participates in Ca(2+) binding. Arg228 contributes to the a carbohydrate binding site.

It belongs to the leguminous lectin family. Homotetramer.

Glucose/D-mannose specific lectin. Has anti-inflammatory activity in rats. Induces histamine release in mast cells from hamster and rat. Induces lymphocyte proliferation and IFNG production. Shows toxicity against the aquatic snail B.glabrata at concentrations higher than 20 ug/ml. In Canavalia brasiliensis (Brazilian jack bean), this protein is Concanavalin-Br.